A 2476-amino-acid polypeptide reads, in one-letter code: Non-reducing polyketide synthase pkdA (2476 aa).

Positions 22–230 (PNLNDAYLQS…VISEARLATL (209 aa)) are N-terminal acylcarrier protein transacylase domain (SAT). The Nucleophile; for transacylase activity role is filled by Cys-142. His-261 serves as the catalytic Proton donor/acceptor; for transacylase activity. Residues 388-805 (DESIAVVGMA…GSNASLVVTQ (418 aa)) enclose the Ketosynthase family 3 (KS3) domain. Active-site for beta-ketoacyl synthase activity residues include Cys-554, His-689, and His-728. The interval 919–1204 (FGGQRSSFVG…GSGVTNLASR (286 aa)) is malonyl-CoA:ACP transacylase (MAT). The N-terminal hotdog fold stretch occupies residues 1290–1417 (QKGLWTFVGY…GRITFQTPKQ (128 aa)). The 303-residue stretch at 1290–1592 (QKGLWTFVGY…FVEVSIAGMS (303 aa)) folds into the PKS/mFAS DH domain. Residues 1321 to 1590 (YVSAHVIAQT…LHFVEVSIAG (270 aa)) form a product template (PT) domain region. His-1325 (proton acceptor; for dehydratase activity) is an active-site residue. The segment at 1445 to 1592 (QTIQGSRNIY…FVEVSIAGMS (148 aa)) is C-terminal hotdog fold. The Proton donor; for dehydratase activity role is filled by Asp-1501. The disordered stretch occupies residues 1626-1649 (DVSKNEKDAKAPSKKKESTSKSPG). The Carrier domain maps to 1650 to 1724 (HDILARVRTL…SLVKCIGANM (75 aa)). The residue at position 1684 (Ser-1684) is an O-(pantetheine 4'-phosphoryl)serine. The disordered stretch occupies residues 1727 to 1766 (SDTSRTGDDSSDDLETASAESETSSGINNEDSHNIDRQQI). A compositionally biased stretch (low complexity) spans 1742–1751 (TASAESETSS). The tract at residues 1881–2030 (ELLRQYPEHA…DCEKTPSSHL (150 aa)) is methyltransferase (CMeT) domain. The tract at residues 2094-2340 (VTGATGSLGS…SWCPVDDVAA (247 aa)) is NADPH-binding domain.

The cofactor is pantetheine 4'-phosphate.

It catalyses the reaction propanoyl-CoA + 3 malonyl-CoA + AH2 + 2 S-adenosyl-L-methionine + H(+) = 2-ethyl-4,6-dihydroxy-3,5-dimethylbenzaldehyde + A + 2 S-adenosyl-L-homocysteine + 3 CO2 + 4 CoA + H2O. Its pathway is secondary metabolite biosynthesis. Non-reducing polyketide synthase that synthesizes 6-ethyl-2,4-dihydroxy-3,5-dimethylbenzaldehyde via condensation of one propanoyl-CoA starter unit with 3 malonyl-CoA units, as well as 2 methylation steps. The sequence is that of Non-reducing polyketide synthase pkdA from Emericella nidulans (strain FGSC A4 / ATCC 38163 / CBS 112.46 / NRRL 194 / M139) (Aspergillus nidulans).